The following is a 92-amino-acid chain: RNA-binding protein Hfq (92 aa).

A Sm domain is found at 9–68 (DPFLNALRRERVPVSIYLVNGIKLQGQVESFDQFVILLKNTVSQMVYKHAISTVVPSRPF).

The protein belongs to the Hfq family. As to quaternary structure, homohexamer.

In terms of biological role, RNA chaperone that binds small regulatory RNA (sRNAs) and mRNAs to facilitate mRNA translational regulation in response to envelope stress, environmental stress and changes in metabolite concentrations. Also binds with high specificity to tRNAs. This is RNA-binding protein Hfq from Shewanella halifaxensis (strain HAW-EB4).